A 243-amino-acid chain; its full sequence is Ubiquinone/menaquinone biosynthesis C-methyltransferase UbiE (243 aa).

S-adenosyl-L-methionine-binding positions include threonine 69, aspartate 90, and 116 to 117; that span reads DA.

The protein belongs to the class I-like SAM-binding methyltransferase superfamily. MenG/UbiE family.

The enzyme catalyses a 2-demethylmenaquinol + S-adenosyl-L-methionine = a menaquinol + S-adenosyl-L-homocysteine + H(+). It catalyses the reaction a 2-methoxy-6-(all-trans-polyprenyl)benzene-1,4-diol + S-adenosyl-L-methionine = a 5-methoxy-2-methyl-3-(all-trans-polyprenyl)benzene-1,4-diol + S-adenosyl-L-homocysteine + H(+). It participates in quinol/quinone metabolism; menaquinone biosynthesis; menaquinol from 1,4-dihydroxy-2-naphthoate: step 2/2. It functions in the pathway cofactor biosynthesis; ubiquinone biosynthesis. Methyltransferase required for the conversion of demethylmenaquinol (DMKH2) to menaquinol (MKH2) and the conversion of 2-polyprenyl-6-methoxy-1,4-benzoquinol (DDMQH2) to 2-polyprenyl-3-methyl-6-methoxy-1,4-benzoquinol (DMQH2). The chain is Ubiquinone/menaquinone biosynthesis C-methyltransferase UbiE from Cupriavidus taiwanensis (strain DSM 17343 / BCRC 17206 / CCUG 44338 / CIP 107171 / LMG 19424 / R1) (Ralstonia taiwanensis (strain LMG 19424)).